The chain runs to 485 residues: Glutamyl-tRNA(Gln) amidotransferase subunit A (485 aa).

Active-site charge relay system residues include lysine 76 and serine 151. The active-site Acyl-ester intermediate is the serine 175.

This sequence belongs to the amidase family. GatA subfamily. As to quaternary structure, heterotrimer of A, B and C subunits.

The catalysed reaction is L-glutamyl-tRNA(Gln) + L-glutamine + ATP + H2O = L-glutaminyl-tRNA(Gln) + L-glutamate + ADP + phosphate + H(+). Its function is as follows. Allows the formation of correctly charged Gln-tRNA(Gln) through the transamidation of misacylated Glu-tRNA(Gln) in organisms which lack glutaminyl-tRNA synthetase. The reaction takes place in the presence of glutamine and ATP through an activated gamma-phospho-Glu-tRNA(Gln). This Thiobacillus denitrificans (strain ATCC 25259 / T1) protein is Glutamyl-tRNA(Gln) amidotransferase subunit A.